Reading from the N-terminus, the 478-residue chain is MARKTLRARRFFSLIFPFFFITSVYAEQTPVSAKTVTVEAKNETFAPQHPDQYQSWKATSEQSAREDALAEDPRLVILWAGYPFSRDYNKPRGHAYAVTDVRETLRTGAPKTAEDGPLPMACWSCKSPDVARLIQQEGEDGYFHGKWARGGPEIVNDLGCADCHNTASDDFAQGKPAITLSRPYAERAMEAIGKPFDKAGRFDQQSMVCGQCHVEYYFDGKNKAVKFPWDEGMKVENMEQYYDAIAFSDWTNSLSKTPMLKAQHPEYETWSAGIHGKNNVTCIDCHMPKVQNAEGKLYTDHKIGNPFDNFAQTCANCHTQDKASLQKVVAERKQAIHDLKIKVEDQLVHAHFEAKAAWDAGATDAEMKPILNDIRHAQWRWDLAIASHGIHMHAPEEGLRMLGSAMDKAADARTKLARLLATKGITHEIPLPDISTKEKAQKAIGLNMQQINAEKQDFLKTVVPQWEDQARKNGLLSQ.

The signal sequence occupies residues M1–A26. H94 contacts heme c. Heme is bound by residues C122, C125, and K126. Heme c is bound by residues C160, C163, H164, C209, C212, and H213. E215, Y216, K261, and Q263 together coordinate Ca(2+). Substrate is bound at residue Y216. H264 is a substrate binding site. 9 residues coordinate heme c: H275, C282, C285, H286, H301, C314, C317, H318, and H393.

Belongs to the cytochrome c-552 family. The cofactor is Ca(2+). Heme c is required as a cofactor.

It localises to the periplasm. The catalysed reaction is 6 Fe(III)-[cytochrome c] + NH4(+) + 2 H2O = 6 Fe(II)-[cytochrome c] + nitrite + 8 H(+). Its pathway is nitrogen metabolism; nitrate reduction (assimilation). In terms of biological role, catalyzes the reduction of nitrite to ammonia, consuming six electrons in the process. In Salmonella typhi, this protein is Cytochrome c-552.